We begin with the raw amino-acid sequence, 533 residues long: Calcineurin-interacting protein 3 (533 aa).

Disordered stretches follow at residues 1–30 (MRSLKRENSGSALSVRSSDSEGDSYHNMDI), 53–85 (PRKQRSCHKRAEPVSEEHRKKESSKNSREYTKR), and 359–404 (MDMS…LTLP). The segment covering 61–85 (KRAEPVSEEHRKKESSKNSREYTKR) has biased composition (basic and acidic residues). The span at 359-372 (MDMSQTLSPEQTLS) shows a compositional bias: polar residues. Basic and acidic residues predominate over residues 373-384 (PREKLQVQDRKI).

Its subcellular location is the nucleus. The sequence is that of Calcineurin-interacting protein 3 from Caenorhabditis elegans.